Consider the following 394-residue polypeptide: Stearoyl-[acyl-carrier-protein] 9-desaturase 1, chloroplastic (394 aa).

The N-terminal 37 residues, 1–37, are a transit peptide targeting the chloroplast; the sequence is MVMAMDRIALFSSSSSVYHHGSSHSHGSKSSRVFTIR. 6 residues coordinate Fe cation: Glu-135, Glu-173, His-176, Glu-226, Glu-259, and His-262.

It belongs to the fatty acid desaturase type 2 family. As to quaternary structure, homodimer. Fe(2+) is required as a cofactor. In terms of tissue distribution, ubiquitously expressed.

It is found in the plastid. The protein resides in the chloroplast. It carries out the reaction octadecanoyl-[ACP] + 2 reduced [2Fe-2S]-[ferredoxin] + O2 + 2 H(+) = (9Z)-octadecenoyl-[ACP] + 2 oxidized [2Fe-2S]-[ferredoxin] + 2 H2O. Its pathway is lipid metabolism; fatty acid metabolism. In terms of biological role, converts stearoyl-ACP to oleoyl-ACP by introduction of a cis double bond between carbons 9 and 10 of the acyl chain. This Arabidopsis thaliana (Mouse-ear cress) protein is Stearoyl-[acyl-carrier-protein] 9-desaturase 1, chloroplastic (S-ACP-DES1).